A 575-amino-acid polypeptide reads, in one-letter code: Membrane protein insertase YidC (575 aa).

The next 6 helical transmembrane spans lie at 6-26 (VFLIFAWLMVAALLWMEWGKD), 357-377 (FSIMAIIGQGLFWVLSHLHSF), 381-401 (WGWAIIGLVLLLRLALYPLSA), 448-468 (GGCLPLLIQMPIFFALYWVLV), 490-510 (PYFILPVLNIAIMWATQKLTP), and 526-546 (PLVFGVMMAFMPAGLVLYWVV).

It belongs to the OXA1/ALB3/YidC family. Type 1 subfamily. As to quaternary structure, interacts with the Sec translocase complex via SecD. Specifically interacts with transmembrane segments of nascent integral membrane proteins during membrane integration.

The protein localises to the cell inner membrane. Required for the insertion and/or proper folding and/or complex formation of integral membrane proteins into the membrane. Involved in integration of membrane proteins that insert both dependently and independently of the Sec translocase complex, as well as at least some lipoproteins. Aids folding of multispanning membrane proteins. This Xanthomonas campestris pv. campestris (strain B100) protein is Membrane protein insertase YidC.